A 223-amino-acid polypeptide reads, in one-letter code: Ethylene-inducing xylanase (223 aa).

The signal sequence occupies residues 1 to 19 (MVSFTTLLAGFVAVTGVLS). Positions 34-223 (QTIGPGTGFN…SSGNANINVS (190 aa)) constitute a GH11 domain. A glycan (N-linked (GlcNAc...) asparagine) is linked at Asn-94. Glu-119 serves as the catalytic Nucleophile. Catalysis depends on Glu-210, which acts as the Proton donor.

Belongs to the glycosyl hydrolase 11 (cellulase G) family. Interactc with tomato LeEix2 receptor to trigger its internalization.

Its subcellular location is the secreted. It catalyses the reaction Endohydrolysis of (1-&gt;4)-beta-D-xylosidic linkages in xylans.. The protein operates within glycan degradation; xylan degradation. In terms of biological role, endo-1,4-beta-xylanase involved in the hydrolysis of xylan, a major structural heterogeneous polysaccharide found in plant biomass representing the second most abundant polysaccharide in the biosphere, after cellulose. Acts as an elicitor of plant defense responses in hosts such as tobacco (Nicotiana tabacum) or tomato (Solanum lycopersicum). Induces the production of ethylene and leads alterations in membrane function with rapid efflux of potassium, uptake of calcium, alkalization of the medium, increased leakage of cellular components and necrosis in plant hosts. EIX is translocated through the xylem of the host plant to the leaf mesophyll, leading to host response to pathogen-derived extracellular proteins in tissues distant from the invading pathogen. Greatly enhances the expression of two calcineurin B-like proteins-interacting protein kinases (CIPKs) family members, OsCIPK14 and OsCIPK15, in rice cultured cells. In tomato, triggers the defense response via binding to and subsequent internalization of the LeEix2 receptor. The protein is Ethylene-inducing xylanase of Hypocrea rufa (Trichoderma viride).